We begin with the raw amino-acid sequence, 179 residues long: Cytochrome b6-f complex iron-sulfur subunit (179 aa).

Residues 21–43 (LLTFGSVTGVALGALYPVVNYFI) traverse the membrane as a helical segment. The Rieske domain occupies 61 to 162 (GNDVVLSKFL…VSVTDDKVFL (102 aa)). The [2Fe-2S] cluster site is built by cysteine 108, histidine 110, cysteine 126, and histidine 129. Cysteine 113 and cysteine 128 are disulfide-bonded.

Belongs to the Rieske iron-sulfur protein family. As to quaternary structure, the 4 large subunits of the cytochrome b6-f complex are cytochrome b6, subunit IV (17 kDa polypeptide, PetD), cytochrome f and the Rieske protein, while the 4 small subunits are PetG, PetL, PetM and PetN. The complex functions as a dimer. [2Fe-2S] cluster serves as cofactor.

It is found in the cellular thylakoid membrane. It catalyses the reaction 2 oxidized [plastocyanin] + a plastoquinol + 2 H(+)(in) = 2 reduced [plastocyanin] + a plastoquinone + 4 H(+)(out). In terms of biological role, component of the cytochrome b6-f complex, which mediates electron transfer between photosystem II (PSII) and photosystem I (PSI), cyclic electron flow around PSI, and state transitions. This Synechococcus elongatus (strain ATCC 33912 / PCC 7942 / FACHB-805) (Anacystis nidulans R2) protein is Cytochrome b6-f complex iron-sulfur subunit.